The primary structure comprises 945 residues: Poly [ADP-ribose] polymerase 1 (945 aa).

The segment at 10–96 adopts a PARP-type 1 zinc-finger fold; sequence YAIEYAKSGR…KLRQEIQHFK (87 aa). Residues C22, C25, H54, and C57 each contribute to the Zn(2+) site. The PARP-type 2; degenerate zinc finger occupies 117 to 183; the sequence is IKTEKSLSNR…DYEENFKIKA (67 aa). Residues 195–251 are disordered; it reads RRSTEPATPASASPTPPEAETPVLSAEGSPESSNKRPASSEIIEIDGEGNPDENDFA. The segment covering 237–248 has biased composition (acidic residues); the sequence is IEIDGEGNPDEN. The PADR1 zinc-binding domain occupies 258 to 397; sequence KEARLMEVQK…NQMSERLYIG (140 aa). Positions 324 to 369 are zinc ribbon; that stretch reads GCPIICQTCSNGKIVYNSSCRTYVCTGYATEYSKCTYESKNPIRTP. 4 residues coordinate Zn(2+): C329, C332, C348, and C358. The 100-residue stretch at 464-563 folds into the WGR domain; it reads RCHVFKNEID…KHFRKMPGMF (100 aa). The PARP alpha-helical domain occupies 586–704; sequence KTLLPKSVKE…DIKFAYDQIS (119 aa). A PARP catalytic domain is found at 717–945; sequence DPVDINYQKL…RVKMHHARHL (229 aa).

It belongs to the ARTD/PARP family.

The protein resides in the nucleus. It catalyses the reaction NAD(+) + (ADP-D-ribosyl)n-acceptor = nicotinamide + (ADP-D-ribosyl)n+1-acceptor + H(+).. The enzyme catalyses L-aspartyl-[protein] + NAD(+) = 4-O-(ADP-D-ribosyl)-L-aspartyl-[protein] + nicotinamide. The catalysed reaction is L-glutamyl-[protein] + NAD(+) = 5-O-(ADP-D-ribosyl)-L-glutamyl-[protein] + nicotinamide. With respect to regulation, inhibited by N-(6-oxo-5,6-dihydrophenanthridin-2-yl)-N,N-dimethylacetamide HCl (PJ34), 1,5-dihydroxyisoquinoline (DHQ) and 3-aminobenzamide (3AB). Functionally, poly[ADP-ribose] polymerase modifies various nuclear proteins by poly(ADP-ribosyl)ation, a post-translational modification synthesized after DNA damage that appears as an obligatory step in a detection/signaling pathway leading to the reparation of DNA strand breaks and programmed cell death. Involved in protection of the genome against mutations. This Caenorhabditis elegans protein is Poly [ADP-ribose] polymerase 1.